Reading from the N-terminus, the 425-residue chain is Glutamyl-tRNA reductase (425 aa).

Substrate contacts are provided by residues 49–52 (TCNR), Ser109, 114–116 (EGQ), and Gln120. The active-site Nucleophile is the Cys50. NADP(+) is bound at residue 189 to 194 (GAGETG).

It belongs to the glutamyl-tRNA reductase family. Homodimer.

The enzyme catalyses (S)-4-amino-5-oxopentanoate + tRNA(Glu) + NADP(+) = L-glutamyl-tRNA(Glu) + NADPH + H(+). It participates in porphyrin-containing compound metabolism; protoporphyrin-IX biosynthesis; 5-aminolevulinate from L-glutamyl-tRNA(Glu): step 1/2. Its pathway is porphyrin-containing compound metabolism; chlorophyll biosynthesis. Catalyzes the NADPH-dependent reduction of glutamyl-tRNA(Glu) to glutamate 1-semialdehyde (GSA). The protein is Glutamyl-tRNA reductase of Pelodictyon phaeoclathratiforme (strain DSM 5477 / BU-1).